Consider the following 270-residue polypeptide: HTH-type transcriptional repressor DrrR1 (270 aa).

A compositionally biased stretch (low complexity) spans 1–11; the sequence is MESGTSRTSDT. The tract at residues 1 to 28 is disordered; it reads MESGTSRTSDTGGTGRAGSTETSGSGDI. The region spanning 49–109 is the HTH tetR-type domain; that stretch reads TLTLDRVVEA…LMLDRVQRPS (61 aa). Residues 72–91 constitute a DNA-binding region (H-T-H motif); the sequence is SMRRVAAELGTGTMSLYRYV.

The protein localises to the cytoplasm. With respect to regulation, daunorubicin and doxorubicin can induce dissociation of DrrR1 from its DNA complex. Ampicillin cannot release DrrR1 from the DNA complex at the same concentrations. Functionally, transcriptional regulator that modulates the expression of the drrA2-drrB2 genes, which encode an ABC transporter involved in daunorubicin efflux, in response to intracellular daunorubicin/doxorubicin accumulation. In the absence of daunorubicin or doxorubicin, binds directly to the drrA2-drrB2 promoter region and negatively regulates expression of the genes. In the presence of daunorubicin or doxorubicin, DrrR1 dissociates from DNA, leading to the transcription of the genes. The chain is HTH-type transcriptional repressor DrrR1 from Streptomyces coeruleorubidus.